The chain runs to 552 residues: MHPPSLVLDTLKRIKLYIAMKLLLPNSEVPRIYWEKAQHLCGFLSMKLISRARCVASSVKQSYSFLVCKSNPLVVQLVYFVIISFAGFLALKNLKPQGKPGPKDLDLLFTSVSTLTVSSMATVEMEDLSDRQLWVLILLMLMGGEVFTSMLGLYFNNANANRNENSQRSLPSISLDIEFNSPANNGDHKITECGQSEETMSQNQVQQNKSITYNPCAVLVRIVTGYFVATVISSSVIIIIYFWIDSDARNVLKSKEINMYTFCIFTAVSSFANCGFTPLNSNMQPFRKNWVLLLLVIPQILAGNTLFSPLLRLCVWVLGKVSGKAEYAYILQHPGETGYKHLHVRRNSVYIVLSVTGLILLQVMFICSFEWNSESLEGMNWLQKLVGLLFQSVNTRQAGESILDISTLSPSTLLLFAVVMYLPSDASFLTANADNQPLTDKKTNSISRALWRNFTVNKLSCLAMFTFLACITERKSISSDPLNFNIFSIVFEIISAFGNVGYSLGYSCQKLLKPDATCKDASYGFVGRWTEEGKLIVILVMFLGRLKEFILK.

Over 1-70 (MHPPSLVLDT…QSYSFLVCKS (70 aa)) the chain is Cytoplasmic. The next 2 membrane-spanning stretches (helical) occupy residues 71-91 (NPLV…FLAL) and 133-153 (LWVL…MLGL). Residues 154–221 (YFNNANANRN…TYNPCAVLVR (68 aa)) are Cytoplasmic-facing. Transmembrane regions (helical) follow at residues 222-242 (IVTG…IIYF) and 291-311 (VLLL…SPLL). Residues 312 to 348 (RLCVWVLGKVSGKAEYAYILQHPGETGYKHLHVRRNS) are Cytoplasmic-facing. The next 2 helical transmembrane spans lie at 349–369 (VYIV…ICSF) and 402–422 (ILDI…VMYL). Over 423–448 (PSDASFLTANADNQPLTDKKTNSISR) the chain is Cytoplasmic. 2 consecutive transmembrane segments (helical) span residues 449-471 (ALWR…LACI) and 524-544 (GFVG…MFLG). The Cytoplasmic segment spans residues 545–552 (RLKEFILK).

It belongs to the TrkH potassium transport family. HKT (TC 2.A.38.3) subfamily. Expressed in shoots. In roots, expressed in epidermis, exodermis, cortex, and sieve elements and companion cells of phloem. In mature leaves, expressed in large highly vacuolated cells of the adaxial epidermis, phloem and xylem.

It localises to the membrane. It carries out the reaction Na(+)(in) = Na(+)(out). Its function is as follows. Functions as a low-affinity sodium transporter. This chain is Cation transporter HKT1;1, found in Oryza sativa subsp. japonica (Rice).